Reading from the N-terminus, the 214-residue chain is Adenylate kinase (214 aa).

Residue 10–15 participates in ATP binding; sequence GAGKGT. The NMP stretch occupies residues 30 to 59; sequence STGDMLRAAVKAGTPLGLEAKKVMDAGQLV. AMP is bound by residues threonine 31, arginine 36, 57-59, 85-88, and glutamine 92; these read QLV and GFPR. The interval 122-159 is LID; that stretch reads GRRVHSGSGRVYHVVFNPPKVEGKDDVTGEDLSIRPDD. ATP-binding positions include arginine 123 and 132 to 133; that span reads VY. AMP is bound by residues arginine 156 and arginine 167. Glutamine 200 contacts ATP.

It belongs to the adenylate kinase family. In terms of assembly, monomer.

The protein resides in the cytoplasm. It carries out the reaction AMP + ATP = 2 ADP. The protein operates within purine metabolism; AMP biosynthesis via salvage pathway; AMP from ADP: step 1/1. Functionally, catalyzes the reversible transfer of the terminal phosphate group between ATP and AMP. Plays an important role in cellular energy homeostasis and in adenine nucleotide metabolism. This Shewanella frigidimarina (strain NCIMB 400) protein is Adenylate kinase.